A 389-amino-acid chain; its full sequence is Pyruvate dehydrogenase E1 component subunit alpha, somatic form, mitochondrial (389 aa).

The transit peptide at 1 to 28 (GKMLAAVSRVLSGVAQKPASRVLVASRT) directs the protein to the mitochondrion. Position 62 is an N6-acetyllysine; alternate (Lys-62). Lys-62 bears the N6-succinyllysine; alternate mark. His-91, Tyr-117, Arg-118, Ala-156, Gly-164, Val-166, Asp-195, Gly-196, Ala-197, Asn-224, and Tyr-226 together coordinate pyruvate. 2 residues coordinate thiamine diphosphate: Tyr-117 and Arg-118. The thiamine diphosphate site is built by Gly-164, Val-166, Asp-195, Gly-196, Ala-197, and Asn-224. Asp-195 is a Mg(2+) binding site. Mg(2+)-binding residues include Asn-224 and Tyr-226. Ser-231 is subject to Phosphoserine; by PDK1. Lys-243 is subject to N6-acetyllysine; alternate. Lys-243 bears the N6-succinyllysine; alternate mark. Lys-276 carries the N6-succinyllysine modification. His-291 is a thiamine diphosphate binding site. Residue Ser-292 is modified to Phosphoserine; by PDK1, PDK2, PDK3 and PDK4. Ser-294 is modified (phosphoserine). Position 299 is a phosphoserine; by PDK1, PDK2, PDK3 and PDK4 (Ser-299). Residue Tyr-300 is modified to Phosphotyrosine. Lys-312 carries the post-translational modification N6-acetyllysine; alternate. Lys-312 carries the N6-succinyllysine; alternate modification. N6-acetyllysine occurs at positions 320 and 335. Residue Lys-384 is modified to N6-succinyllysine.

In terms of assembly, heterotetramer of two PDHA1 and two PDHB subunits. The heterotetramer interacts with DLAT, and is part of the multimeric pyruvate dehydrogenase complex that contains multiple copies of pyruvate dehydrogenase (E1), dihydrolipoamide acetyltransferase (DLAT, E2) and lipoamide dehydrogenase (DLD, E3). These subunits are bound to an inner core composed of about 48 DLAT and 12 PDHX molecules. Thiamine diphosphate is required as a cofactor. It depends on Mg(2+) as a cofactor. Post-translationally, phosphorylation at Ser-231, Ser-292 and Ser-299 by PDK family kinases inactivates the enzyme; for this phosphorylation at a single site is sufficient. Phosphorylation at Ser-292 interferes with access to active site, and thereby inactivates the enzyme. Dephosphorylation at all three sites, i.e. at Ser-231, Ser-292 and Ser-299, is required for reactivation. In terms of processing, acetylation alters the phosphorylation pattern. Deacetylated by SIRT3.

The protein localises to the mitochondrion matrix. It carries out the reaction N(6)-[(R)-lipoyl]-L-lysyl-[protein] + pyruvate + H(+) = N(6)-[(R)-S(8)-acetyldihydrolipoyl]-L-lysyl-[protein] + CO2. Pyruvate dehydrogenase activity is inhibited by phosphorylation of PDHA1; it is reactivated by dephosphorylation. Its function is as follows. The pyruvate dehydrogenase complex catalyzes the overall conversion of pyruvate to acetyl-CoA and CO(2), and thereby links the glycolytic pathway to the tricarboxylic cycle. This is Pyruvate dehydrogenase E1 component subunit alpha, somatic form, mitochondrial (PDHA1) from Sus scrofa (Pig).